The following is a 90-amino-acid chain: Small ribosomal subunit protein uS15c (90 aa).

It belongs to the universal ribosomal protein uS15 family. As to quaternary structure, part of the 30S ribosomal subunit.

The protein resides in the plastid. The protein localises to the chloroplast. The protein is Small ribosomal subunit protein uS15c (rps15) of Lotus japonicus (Lotus corniculatus var. japonicus).